A 326-amino-acid chain; its full sequence is GTP 3',8-cyclase (326 aa).

A Radical SAM core domain is found at 7 to 232 (GFGRSFPYLR…PRAADAGPAR (226 aa)). Residue Arg-16 participates in GTP binding. 2 residues coordinate [4Fe-4S] cluster: Cys-23 and Cys-27. S-adenosyl-L-methionine is bound at residue Tyr-29. Residue Cys-30 participates in [4Fe-4S] cluster binding. Arg-65 is a binding site for GTP. Residue Gly-69 coordinates S-adenosyl-L-methionine. Thr-96 serves as a coordination point for GTP. An S-adenosyl-L-methionine-binding site is contributed by Ser-120. Position 157 (Lys-157) interacts with GTP. Met-191 contacts S-adenosyl-L-methionine. Positions 254 and 257 each coordinate [4Fe-4S] cluster. Residue 259–261 (RLR) coordinates GTP. A [4Fe-4S] cluster-binding site is contributed by Cys-271.

It belongs to the radical SAM superfamily. MoaA family. As to quaternary structure, monomer and homodimer. The cofactor is [4Fe-4S] cluster.

The enzyme catalyses GTP + AH2 + S-adenosyl-L-methionine = (8S)-3',8-cyclo-7,8-dihydroguanosine 5'-triphosphate + 5'-deoxyadenosine + L-methionine + A + H(+). The protein operates within cofactor biosynthesis; molybdopterin biosynthesis. Catalyzes the cyclization of GTP to (8S)-3',8-cyclo-7,8-dihydroguanosine 5'-triphosphate. The protein is GTP 3',8-cyclase of Stenotrophomonas maltophilia (strain K279a).